Consider the following 371-residue polypeptide: Methionine import ATP-binding protein MetN (371 aa).

The ABC transporter domain maps to 29 to 270 (IRIEGVRKVY…PRHEVTRRFV (242 aa)). 67 to 74 (GRSGAGKS) lines the ATP pocket.

Belongs to the ABC transporter superfamily. Methionine importer (TC 3.A.1.24) family. In terms of assembly, the complex is composed of two ATP-binding proteins (MetN), two transmembrane proteins (MetI) and a solute-binding protein (MetQ).

The protein localises to the cell inner membrane. It catalyses the reaction L-methionine(out) + ATP + H2O = L-methionine(in) + ADP + phosphate + H(+). It carries out the reaction D-methionine(out) + ATP + H2O = D-methionine(in) + ADP + phosphate + H(+). In terms of biological role, part of the ABC transporter complex MetNIQ involved in methionine import. Responsible for energy coupling to the transport system. This chain is Methionine import ATP-binding protein MetN, found in Rhodopseudomonas palustris (strain BisA53).